Reading from the N-terminus, the 165-residue chain is Probable calcium-binding protein CML18 (165 aa).

4 EF-hand domains span residues 16 to 51, 52 to 87, 90 to 125, and 126 to 161; these read EQLA…LGLK, PSQD…DLVK, YTDD…LGHA, and LTAE…AAFD. Ca(2+) is bound by residues Asp29, Asn31, Asp33, Ser35, Glu40, Asp65, Asn67, Asn69, Glu76, Asp103, Asp105, Asn107, Tyr109, Glu114, Asp139, Asp141, Asp143, Cys145, and Glu150.

In terms of assembly, calcium and pH-dependent interaction with NHX1 (increases when pH decreases, better at pH 5.5 than at pH 7.5). Also interacts with the CPB protein At2g18750.

It localises to the vacuole. Potential calcium sensor that modulates ion selectivity of NHX1. In Arabidopsis thaliana (Mouse-ear cress), this protein is Probable calcium-binding protein CML18 (CML18).